A 139-amino-acid polypeptide reads, in one-letter code: Transmembrane protein 250 (139 aa).

Transmembrane regions (helical) follow at residues phenylalanine 56–leucine 76 and valine 116–phenylalanine 136.

As to quaternary structure, (Microbial infection) Interacts with herpes simplex virus 1/HHV-1 protein CVC2/UL25.

The protein resides in the membrane. The protein localises to the nucleus. It is found in the cytoplasm. Functionally, may play a role in cell proliferation by promoting progression into S phase. Its function is as follows. (Microbial infection) Promotes human herpes simplex virus 1/HHV-1 proliferation. The protein is Transmembrane protein 250 of Homo sapiens (Human).